Reading from the N-terminus, the 31-residue chain is uncharacterized protein (31 aa).

The helical transmembrane segment at 7–29 threads the bilayer; it reads TVVLINFFAAVGLFTLISMRFGW.

It localises to the cell inner membrane. This is an uncharacterized protein from Escherichia coli (strain K12).